We begin with the raw amino-acid sequence, 229 residues long: Non-structural protein P8 (229 aa).

The next 2 membrane-spanning stretches (helical) occupy residues 119 to 139 and 162 to 182; these read IIHM…VCTL and SLNP…MVCA.

It belongs to the orbivirus NS3 family. Forms homooligomers via coiled-coil motif. Interacts with host OPTN; this interaction inhibits innate immune response.

The protein localises to the host cell membrane. The protein resides in the host Golgi apparatus. Functionally, plays a role in the inhibition of host innate immune response. Interacts with host OPTN and thus inhibits the recruitment of TBK1 to the host Golgi apparatus. In turn, downstream partner IRF3 cannot be activated and IFN-beta production is impaired. Facilitates viral particle release either by increasing plasma membrane permeability through a viroporin-like activity or by viral budding. This Antilocapra americana (Pronghorn) protein is Non-structural protein P8 (Segment-10).